Reading from the N-terminus, the 775-residue chain is Tumor necrosis factor alpha-induced protein 3 (775 aa).

Ala-2 carries the post-translational modification N-acetylalanine. Residues Pro-58–Glu-300 form a TRAF-binding region. The 172-residue stretch at Leu-92–Leu-263 folds into the OTU domain. Residue Asp-100 is part of the active site. The Nucleophile role is filled by Cys-103. Interaction with ubiquitin stretches follow at residues Leu-157–Tyr-159, Ser-190–Glu-192, and Phe-224–Leu-227. Catalysis depends on His-256, which acts as the Proton acceptor. Residues Ala-369–Gly-775 are interaction with TNIP1. The A20-type 1 zinc-finger motif lies at Ser-381–Ser-416. The segment at Lys-386 to Thr-445 is interaction with RIPK1. Residues Cys-387, Cys-392, Cys-404, and Cys-407 each coordinate Zn(2+). Residues Gln-415–Thr-455 form a disordered region. Ser-451 is subject to Phosphoserine. A20-type zinc fingers lie at residues Glu-464 to His-499 and Thr-500 to Ser-533. Zn(2+) is bound by residues Cys-470, Cys-475, Cys-487, Cys-490, Cys-506, Cys-509, Cys-521, and Cys-524. The segment covering Thr-567 to Ala-580 has biased composition (polar residues). Residues Thr-567–Ser-590 form a disordered region. A20-type zinc fingers lie at residues Arg-586–Gln-621, Phe-636–Phe-671, Val-695–Ser-730, and Glu-741–Gly-775. The interval Ser-590–Val-640 is required for proteasomal degradation of UBE2N and UBE2D3, TRAF6 deubiquitination, and TAX1BP1 interaction with UBE2N. Residues Lys-591–Gly-775 form a sufficient for inhibitory activity of TNF-induced NF-kappa-B activity region. The Zn(2+) site is built by Cys-592, Cys-597, Cys-609, Cys-612, Cys-642, Cys-647, Cys-659, Cys-662, Cys-701, Cys-706, Cys-718, Cys-721, Cys-747, Cys-752, Cys-764, and Cys-767. The interval Arg-682–Gly-775 is required for lysosomal localization and for TRAF2 lysosomal degradation.

This sequence belongs to the peptidase C64 family. Homodimer. Interacts with TNIP1, TAX1BP1 and TRAF2. Interacts with RNF11, ITCH and TAX1BP1 only after TNF stimulation; these interaction are transient and they are lost after 1 hour of stimulation with TNF. Interacts with YWHAZ and YWHAH. Interacts with IKBKG; the interaction is induced by TNF stimulation and by polyubiquitin. Interacts with RIPK1. Interacts with UBE2N; the interaction requires TAX1BP1. Interacts with TRAF6. In terms of tissue distribution, found in most tissues during development. Strikingly high levels are found in lymphoid organs, including the thymus, spleen, and gut-associated lymphoid tissue. Constitutively expressed in immature and mature thymocyte subpopulations as well as in resting peripheral T-cells; activation of these leads to down-regulation.

The protein resides in the cytoplasm. Its subcellular location is the nucleus. It is found in the lysosome. The catalysed reaction is Thiol-dependent hydrolysis of ester, thioester, amide, peptide and isopeptide bonds formed by the C-terminal Gly of ubiquitin (a 76-residue protein attached to proteins as an intracellular targeting signal).. In terms of biological role, ubiquitin-editing enzyme that contains both ubiquitin ligase and deubiquitinase activities. Involved in immune and inflammatory responses signaled by cytokines, such as TNF-alpha and IL-1 beta, or pathogens via Toll-like receptors (TLRs) through terminating NF-kappa-B activity. Essential component of a ubiquitin-editing protein complex, comprising also RNF11, ITCH and TAX1BP1, that ensures the transient nature of inflammatory signaling pathways. In cooperation with TAX1BP1 promotes disassembly of E2-E3 ubiquitin protein ligase complexes in IL-1R and TNFR-1 pathways; affected are at least E3 ligases TRAF6, TRAF2 and BIRC2, and E2 ubiquitin-conjugating enzymes UBE2N and UBE2D3. In cooperation with TAX1BP1 promotes ubiquitination of UBE2N and proteasomal degradation of UBE2N and UBE2D3. Upon TNF stimulation, deubiquitinates 'Lys-63'-polyubiquitin chains on RIPK1 and catalyzes the formation of 'Lys-48'-polyubiquitin chains. This leads to RIPK1 proteasomal degradation and consequently termination of the TNF- or LPS-mediated activation of NF-kappa-B. Deubiquitinates TRAF6 probably acting on 'Lys-63'-linked polyubiquitin. Upon T-cell receptor (TCR)-mediated T-cell activation, deubiquitinates 'Lys-63'-polyubiquitin chains on MALT1 thereby mediating disassociation of the CBM (CARD11:BCL10:MALT1) and IKK complexes and preventing sustained IKK activation. Deubiquitinates NEMO/IKBKG; the function is facilitated by TNIP1 and leads to inhibition of NF-kappa-B activation. Upon stimulation by bacterial peptidoglycans, probably deubiquitinates RIPK2. Can also inhibit I-kappa-B-kinase (IKK) through a non-catalytic mechanism which involves polyubiquitin; polyubiquitin promotes association with IKBKG and prevents IKK MAP3K7-mediated phosphorylation. Targets TRAF2 for lysosomal degradation. In vitro able to deubiquitinate 'Lys-11'-, 'Lys-48'- and 'Lys-63' polyubiquitin chains. Inhibitor of programmed cell death. Has a role in the function of the lymphoid system. Required for LPS-induced production of pro-inflammatory cytokines and IFN beta in LPS-tolerized macrophages. In Mus musculus (Mouse), this protein is Tumor necrosis factor alpha-induced protein 3 (Tnfaip3).